The chain runs to 173 residues: uncharacterized protein (173 aa).

The next 3 helical transmembrane spans lie at 24 to 44 (VAFIAIPISQFCFFNLLWLFF), 82 to 102 (YILFNILIFATNILVICSYFI), and 135 to 155 (LIKRFLAYITFPIGIFFILFS).

The protein localises to the cell membrane. This is an uncharacterized protein from Rickettsia prowazekii (strain Madrid E).